Reading from the N-terminus, the 614-residue chain is DNA ligase (614 aa).

Residues 29 to 33 (DQDYD) and 73 to 74 (SI) contribute to the NAD(+) site. The active-site N6-AMP-lysine intermediate is Lys111. Residues Arg127, Glu158, and Lys270 each coordinate NAD(+). Residues Cys358, Cys361, Cys374, and Cys380 each coordinate Zn(2+). Residues 538-614 (TLTHELFDKK…MTETDYLSKI (77 aa)) form the BRCT domain.

The protein belongs to the NAD-dependent DNA ligase family. LigA subfamily. Mg(2+) serves as cofactor. Mn(2+) is required as a cofactor.

The catalysed reaction is NAD(+) + (deoxyribonucleotide)n-3'-hydroxyl + 5'-phospho-(deoxyribonucleotide)m = (deoxyribonucleotide)n+m + AMP + beta-nicotinamide D-nucleotide.. In terms of biological role, DNA ligase that catalyzes the formation of phosphodiester linkages between 5'-phosphoryl and 3'-hydroxyl groups in double-stranded DNA using NAD as a coenzyme and as the energy source for the reaction. It is essential for DNA replication and repair of damaged DNA. This chain is DNA ligase, found in Ruthia magnifica subsp. Calyptogena magnifica.